The chain runs to 48 residues: Large ribosomal subunit protein bL33A (48 aa).

It belongs to the bacterial ribosomal protein bL33 family.

This Metamycoplasma arthritidis (strain 158L3-1) (Mycoplasma arthritidis) protein is Large ribosomal subunit protein bL33A.